Reading from the N-terminus, the 388-residue chain is GTPase Obg (388 aa).

Residues 4–162 enclose the Obg domain; that stretch reads SNFVDYVKIY…MTVILELKLL (159 aa). The segment at 18 to 45 is disordered; that stretch reads KGGRGSTHMRREKYTPNGGPDGGDGGRG. The span at 36 to 45 shows a compositional bias: gly residues; that stretch reads GPDGGDGGRG. The OBG-type G domain maps to 163 to 329; it reads ADVGLVGFPN…LKDILWTELN (167 aa). Residues 169-176, 194-198, 216-219, 283-286, and 310-312 contribute to the GTP site; these read GFPNAGKS, FTTLE, DIPG, TKSD, and SSV. Positions 176 and 196 each coordinate Mg(2+). The interval 352–388 is disordered; sequence LKDMGEDEELDYEYEDDGDGDEDDLDYEYEEEDWEDK. Acidic residues predominate over residues 356–388; that stretch reads GEDEELDYEYEDDGDGDEDDLDYEYEEEDWEDK.

Belongs to the TRAFAC class OBG-HflX-like GTPase superfamily. OBG GTPase family. As to quaternary structure, monomer. Mg(2+) serves as cofactor.

Its subcellular location is the cytoplasm. Its function is as follows. An essential GTPase which binds GTP, GDP and possibly (p)ppGpp with moderate affinity, with high nucleotide exchange rates and a fairly low GTP hydrolysis rate. Plays a role in control of the cell cycle, stress response, ribosome biogenesis and in those bacteria that undergo differentiation, in morphogenesis control. The polypeptide is GTPase Obg (Bacteroides fragilis (strain ATCC 25285 / DSM 2151 / CCUG 4856 / JCM 11019 / LMG 10263 / NCTC 9343 / Onslow / VPI 2553 / EN-2)).